Here is a 206-residue protein sequence, read N- to C-terminus: Small ribosomal subunit protein uS4 (206 aa).

The 61-residue stretch at 96 to 156 (CRLDNVVYRM…EKSLNQLRIV (61 aa)) folds into the S4 RNA-binding domain.

This sequence belongs to the universal ribosomal protein uS4 family. As to quaternary structure, part of the 30S ribosomal subunit. Contacts protein S5. The interaction surface between S4 and S5 is involved in control of translational fidelity.

Its function is as follows. One of the primary rRNA binding proteins, it binds directly to 16S rRNA where it nucleates assembly of the body of the 30S subunit. In terms of biological role, with S5 and S12 plays an important role in translational accuracy. This Pseudomonas entomophila (strain L48) protein is Small ribosomal subunit protein uS4.